The following is a 202-amino-acid chain: Methylthioribulose-1-phosphate dehydratase (202 aa).

Positions 93 and 95 each coordinate Zn(2+).

The protein belongs to the aldolase class II family. MtnB subfamily. It depends on Zn(2+) as a cofactor.

The catalysed reaction is 5-(methylsulfanyl)-D-ribulose 1-phosphate = 5-methylsulfanyl-2,3-dioxopentyl phosphate + H2O. It participates in amino-acid biosynthesis; L-methionine biosynthesis via salvage pathway; L-methionine from S-methyl-5-thio-alpha-D-ribose 1-phosphate: step 2/6. Catalyzes the dehydration of methylthioribulose-1-phosphate (MTRu-1-P) into 2,3-diketo-5-methylthiopentyl-1-phosphate (DK-MTP-1-P). The sequence is that of Methylthioribulose-1-phosphate dehydratase from Klebsiella pneumoniae (strain 342).